The primary structure comprises 211 residues: Protein-L-isoaspartate O-methyltransferase (211 aa).

Ser60 is an active-site residue.

It belongs to the methyltransferase superfamily. L-isoaspartyl/D-aspartyl protein methyltransferase family.

The protein localises to the cytoplasm. The catalysed reaction is [protein]-L-isoaspartate + S-adenosyl-L-methionine = [protein]-L-isoaspartate alpha-methyl ester + S-adenosyl-L-homocysteine. In terms of biological role, catalyzes the methyl esterification of L-isoaspartyl residues in peptides and proteins that result from spontaneous decomposition of normal L-aspartyl and L-asparaginyl residues. It plays a role in the repair and/or degradation of damaged proteins. The chain is Protein-L-isoaspartate O-methyltransferase from Pseudomonas aeruginosa (strain LESB58).